The sequence spans 200 residues: MFRHSSRLLARATTMGWRRPFSTDLPAETAADSTFVEAWKKLIPNVDPPKTPSAYMAPRPATPSSIPSKLTVNFVLPYSSELAGKEVDMVIIPATTGQMGVLPGHVATIAELKPGVMSVHEGNDVSKYFVSGGFAFIHANSFADIIAVEAVPLDRIDANLVQKGLAEFTQKLNTASTDVEKAEAQIGVDVHSALNAALTG.

A mitochondrion-targeting transit peptide spans 1-21 (MFRHSSRLLARATTMGWRRPF).

This sequence belongs to the ATPase epsilon chain family. F-type ATPases have 2 components, CF(1) - the catalytic core - and CF(0) - the membrane proton channel. CF(1) has five subunits: alpha(3), beta(3), gamma(1), delta(1), epsilon(1). CF(0) has three main subunits: a, b and c.

Its subcellular location is the mitochondrion. It localises to the mitochondrion inner membrane. Mitochondrial membrane ATP synthase (F(1)F(0) ATP synthase or Complex V) produces ATP from ADP in the presence of a proton gradient across the membrane which is generated by electron transport complexes of the respiratory chain. F-type ATPases consist of two structural domains, F(1) - containing the extramembraneous catalytic core, and F(0) - containing the membrane proton channel, linked together by a central stalk and a peripheral stalk. During catalysis, ATP turnover in the catalytic domain of F(1) is coupled via a rotary mechanism of the central stalk subunits to proton translocation. Part of the complex F(1) domain and of the central stalk which is part of the complex rotary element. Rotation of the central stalk against the surrounding alpha(3)beta(3) subunits leads to hydrolysis of ATP in three separate catalytic sites on the beta subunits. The sequence is that of ATP synthase subunit delta', mitochondrial from Ipomoea batatas (Sweet potato).